Reading from the N-terminus, the 197-residue chain is Nucleoid occlusion factor SlmA (197 aa).

The 61-residue stretch at 7–67 folds into the HTH tetR-type domain; sequence INRREHILQC…GLIDFIEESL (61 aa). The segment at residues 30–49 is a DNA-binding region (H-T-H motif); it reads TTAKLAAEVGVSEAALYRHF.

This sequence belongs to the nucleoid occlusion factor SlmA family. Homodimer. Interacts with FtsZ.

The protein resides in the cytoplasm. It is found in the nucleoid. Required for nucleoid occlusion (NO) phenomenon, which prevents Z-ring formation and cell division over the nucleoid. Acts as a DNA-associated cell division inhibitor that binds simultaneously chromosomal DNA and FtsZ, and disrupts the assembly of FtsZ polymers. SlmA-DNA-binding sequences (SBS) are dispersed on non-Ter regions of the chromosome, preventing FtsZ polymerization at these regions. This Shewanella loihica (strain ATCC BAA-1088 / PV-4) protein is Nucleoid occlusion factor SlmA.